Consider the following 445-residue polypeptide: Ubiquitin carboxyl-terminal hydrolase MINDY-3 (445 aa).

The active-site Nucleophile is the C51. S125 carries the phosphoserine modification. H287 functions as the Proton acceptor in the catalytic mechanism.

It belongs to the MINDY deubiquitinase family. FAM188 subfamily. In terms of assembly, interacts with COPS5.

It localises to the nucleus. The catalysed reaction is Thiol-dependent hydrolysis of ester, thioester, amide, peptide and isopeptide bonds formed by the C-terminal Gly of ubiquitin (a 76-residue protein attached to proteins as an intracellular targeting signal).. Functionally, hydrolase that can remove 'Lys-48'-linked conjugated ubiquitin from proteins. The sequence is that of Ubiquitin carboxyl-terminal hydrolase MINDY-3 (MINDY3) from Bos taurus (Bovine).